A 208-amino-acid chain; its full sequence is ER membrane protein complex subunit 8/9 homolog (208 aa).

The 136-residue stretch at 11 to 146 (YEISQNAYIK…ERSPVMQLCV (136 aa)) folds into the MPN domain.

Belongs to the EMC8/EMC9 family.

This is ER membrane protein complex subunit 8/9 homolog (EMB2731) from Arabidopsis thaliana (Mouse-ear cress).